Here is a 201-residue protein sequence, read N- to C-terminus: 3-isopropylmalate dehydratase small subunit (201 aa).

This sequence belongs to the LeuD family. LeuD type 1 subfamily. Heterodimer of LeuC and LeuD.

It carries out the reaction (2R,3S)-3-isopropylmalate = (2S)-2-isopropylmalate. Its pathway is amino-acid biosynthesis; L-leucine biosynthesis; L-leucine from 3-methyl-2-oxobutanoate: step 2/4. In terms of biological role, catalyzes the isomerization between 2-isopropylmalate and 3-isopropylmalate, via the formation of 2-isopropylmaleate. The chain is 3-isopropylmalate dehydratase small subunit from Escherichia coli O9:H4 (strain HS).